The primary structure comprises 442 residues: GTPase Der (442 aa).

EngA-type G domains lie at 2–167 (RTIA…PIQN) and 175–351 (FKFC…EQAM). GTP is bound by residues 8 to 15 (GKPNVGKS), 55 to 59 (DTGGI), 119 to 122 (NKIE), 181 to 188 (GRPNVGKS), 228 to 232 (DTAGI), and 293 to 296 (NKWD). Positions 352 to 436 (RKIATSLLND…PITLYWQDKN (85 aa)) constitute a KH-like domain.

The protein belongs to the TRAFAC class TrmE-Era-EngA-EngB-Septin-like GTPase superfamily. EngA (Der) GTPase family. In terms of assembly, associates with the 50S ribosomal subunit.

Its function is as follows. GTPase that plays an essential role in the late steps of ribosome biogenesis. The polypeptide is GTPase Der (Ureaplasma parvum serovar 3 (strain ATCC 27815 / 27 / NCTC 11736)).